A 252-amino-acid polypeptide reads, in one-letter code: Proteasome subunit alpha type-7-1B (252 aa).

The protein belongs to the peptidase T1A family. As to quaternary structure, the 26S proteasome consists of a 20S proteasome core and two 19S regulatory subunits. The 20S proteasome core is composed of 28 subunits that are arranged in four stacked rings, resulting in a barrel-shaped structure. The two end rings are each formed by seven alpha subunits, and the two central rings are each formed by seven beta subunits. The catalytic chamber with the active sites is on the inside of the barrel. In terms of tissue distribution, testis specific.

It localises to the cytoplasm. The protein resides in the nucleus. Its function is as follows. The proteasome is a multicatalytic proteinase complex which is characterized by its ability to cleave peptides with Arg, Phe, Tyr, Leu, and Glu adjacent to the leaving group at neutral or slightly basic pH. The proteasome has an ATP-dependent proteolytic activity. This Drosophila melanogaster (Fruit fly) protein is Proteasome subunit alpha type-7-1B (Prosalpha4T2).